An 878-amino-acid polypeptide reads, in one-letter code: Probable di- and tripeptidase DUG2 (878 aa).

WD repeat units follow at residues 18–57 (NHAF…LIHT), 68–107 (HTRS…IRDD), 235–274 (RFNQ…GQNT), 282–322 (DKID…IIST), and 362–405 (PQQG…SAVP). Residue H520 coordinates Zn(2+). Residue D522 is part of the active site. Position 553 (D553) interacts with Zn(2+). Residue E586 is the Proton acceptor of the active site. Zn(2+) is bound at residue E587. A WD 6 repeat occupies 608–651 (IDWILLSNSTWVDQEHPCLNYGLRGVINAQIKVWSDKPDGHSGL). Position 853 (H853) interacts with Zn(2+).

It belongs to the peptidase M20A family. Component of the GSH degradosomal complex composed of at least DUG1, DUG2 and DUG3. Requires Zn(2+) as cofactor.

The protein localises to the cytoplasm. Its subcellular location is the nucleus. Component of the GSH degradosomal complex involved in the degradation of glutathione (GSH) and other peptides containing a gamma-glu-X bond. The sequence is that of Probable di- and tripeptidase DUG2 (DUG2) from Saccharomyces cerevisiae (strain ATCC 204508 / S288c) (Baker's yeast).